The chain runs to 767 residues: Photosystem I P700 chlorophyll a apoprotein A1 (767 aa).

Transmembrane regions (helical) follow at residues 72–95 (IFSAHFGHLAVIFIWLSGAFFHGA), 158–181 (LMALAIGALVMAGLMLNAGVFHYH), 197–221 (LNHHLAGLLGLGSLSWAGHLIHVSA), 305–323 (IAHHHVAIAVLFIVAGHMY), 364–387 (WHAQLGLNLAMLGSLSIIVAQHMY), 403–429 (IGLFTHHMWIGGFLIVGGAAHAAIAMV), 451–473 (AIISHLNWVCIWLGAHSFGLYIH), and 548–566 (FMVHHIHAFTIHVTVLILL). [4Fe-4S] cluster is bound by residues C590 and C599. 2 helical membrane passes run 606–627 (HVFLGLFWMYNSLSIVIFHFSW) and 681–703 (TSAYGIMFLGAHFIWAFSLMFLF). A chlorophyll a'-binding site is contributed by H692. Chlorophyll a contacts are provided by M700 and Y708. Position 709 (W709) interacts with phylloquinone. The helical transmembrane segment at 741–761 (AVGVAHYLLGGIATTWAFFHA) threads the bilayer.

This sequence belongs to the PsaA/PsaB family. The PsaA/B heterodimer binds the P700 chlorophyll special pair and subsequent electron acceptors. PSI consists of a core antenna complex that captures photons, and an electron transfer chain that converts photonic excitation into a charge separation. The cyanobacterial PSI reaction center is composed of one copy each of PsaA,B,C,D,E,F,I,J,K,L,M and X, and forms trimeric complexes. The cofactor is PSI electron transfer chain: 5 chlorophyll a, 1 chlorophyll a', 2 phylloquinones and 3 4Fe-4S clusters. PSI core antenna: 90 chlorophyll a, 22 carotenoids, 3 phospholipids and 1 galactolipid. P700 is a chlorophyll a/chlorophyll a' dimer, A0 is one or more chlorophyll a, A1 is one or both phylloquinones and FX is a shared 4Fe-4S iron-sulfur center..

The protein resides in the cellular thylakoid membrane. The enzyme catalyses reduced [plastocyanin] + hnu + oxidized [2Fe-2S]-[ferredoxin] = oxidized [plastocyanin] + reduced [2Fe-2S]-[ferredoxin]. Its function is as follows. PsaA and PsaB bind P700, the primary electron donor of photosystem I (PSI), as well as the electron acceptors A0, A1 and FX. PSI is a plastocyanin/cytochrome c6-ferredoxin oxidoreductase, converting photonic excitation into a charge separation, which transfers an electron from the donor P700 chlorophyll pair to the spectroscopically characterized acceptors A0, A1, FX, FA and FB in turn. Oxidized P700 is reduced on the lumenal side of the thylakoid membrane by plastocyanin or cytochrome c6. This Parasynechococcus marenigrum (strain WH8102) protein is Photosystem I P700 chlorophyll a apoprotein A1.